The sequence spans 664 residues: Prelamin-A/C (664 aa).

At M1 the chain carries N-acetylmethionine. The disordered stretch occupies residues 1–25; it reads METPSQRRATRSGAQASSTPLSPTR. Residues 1–33 are head; the sequence is METPSQRRATRSGAQASSTPLSPTRITRLQEKE. The interaction with MLIP stretch occupies residues 1-130; it reads METPSQRRAT…TKKEGDLIAA (130 aa). T3 is subject to Phosphothreonine. Residue S5 is modified to Phosphoserine. The residue at position 10 (T10) is a Phosphothreonine. Phosphoserine occurs at positions 12 and 18. A Phosphothreonine modification is found at T19. At S22 the chain carries Phosphoserine; by CDK1. The IF rod domain occupies 31–387; the sequence is EKEDLQELND…KLLEGEEERL (357 aa). K32 carries the post-translational modification N6-acetyllysine; alternate. At K32 the chain carries N6-succinyllysine; alternate. Residue K32 forms a Glycyl lysine isopeptide (Lys-Gly) (interchain with G-Cter in SUMO2); alternate linkage. The interval 34-70 is coil 1A; that stretch reads DLQELNDRLAVYIDRVRSLETENAGLRLRITESEEVV. Residues S51, S66, and S71 each carry the phosphoserine modification. The segment at 71 to 80 is linker 1; sequence SREVSGIKAA. Residues K78 and K97 each carry the N6-acetyllysine modification. A coil 1B region spans residues 81–218; the sequence is YEAELGDARK…NIYSEELRET (138 aa). K97 participates in a covalent cross-link: Glycyl lysine isopeptide (Lys-Gly) (interchain with G-Cter in SUMO2). A Phosphoserine modification is found at S107. N6-acetyllysine occurs at positions 108, 114, 123, 135, 144, and 155. K171 is subject to N6-acetyllysine; alternate. Residue K171 is modified to N6-succinyllysine; alternate. A Glycyl lysine isopeptide (Lys-Gly) (interchain with G-Cter in SUMO2); alternate cross-link involves residue K171. An N6-acetyllysine mark is found at K180, K201, and K208. K201 is covalently cross-linked (Glycyl lysine isopeptide (Lys-Gly) (interchain with G-Cter in SUMO2); alternate). K201 is covalently cross-linked (Glycyl lysine isopeptide (Lys-Gly) (interchain with G-Cter in SUMO); alternate). K208 participates in a covalent cross-link: Glycyl lysine isopeptide (Lys-Gly) (interchain with G-Cter in SUMO2). S212 is subject to Phosphoserine. Residues K219 and K233 each participate in a glycyl lysine isopeptide (Lys-Gly) (interchain with G-Cter in SUMO2) cross-link. Positions 219-242 are linker 2; sequence KRRHETRLVEIDNGKQREFESRLA. An N6-acetyllysine mark is found at K233, K260, K265, and K270. The interval 243-383 is coil 2; the sequence is DALQELRAQH…HAYRKLLEGE (141 aa). The necessary and sufficient for the interaction with IFFO1 stretch occupies residues 259 to 331; the sequence is YKKELEKTYS…DLEDSLARER (73 aa). A Glycyl lysine isopeptide (Lys-Gly) (interchain with G-Cter in SUMO2); alternate cross-link involves residue K260. Residue K270 forms a Glycyl lysine isopeptide (Lys-Gly) (interchain with G-Cter in SUMO2); alternate linkage. Phosphoserine is present on S277. A Phosphoserine; by ATR modification is found at S282. A phosphoserine mark is found at S301 and S307. Residue K311 forms a Glycyl lysine isopeptide (Lys-Gly) (interchain with G-Cter in SUMO2); alternate linkage. K311, K316, and K341 each carry N6-acetyllysine. Residues K366 and K378 each participate in a glycyl lysine isopeptide (Lys-Gly) (interchain with G-Cter in SUMO2) cross-link. The disordered stretch occupies residues 384–442; the sequence is EERLRLSPSPTSQRSRGRASSHSSQTQGGGSVTKKRKLESTESRSSFSQHARTSGRVAV. The interval 384–664 is tail; sequence EERLRLSPSP…TQSPQNCSIM (281 aa). Phosphoserine is present on S390. Phosphoserine; by CDK1 is present on S392. The residue at position 395 (S395) is a Phosphoserine; by ATR. Phosphoserine occurs at positions 398, 403, 404, 406, 407, and 414. T416 carries the phosphothreonine modification. The residue at position 417 (K417) is an N6-acetyllysine. Residues K417 and K420 each participate in a glycyl lysine isopeptide (Lys-Gly) (interchain with G-Cter in SUMO2) cross-link. Residues 417-422 carry the Nuclear localization signal motif; that stretch reads KKRKLE. Residues S423, S426, S429, and S431 each carry the phosphoserine modification. Residues 426–435 are compositionally biased toward polar residues; sequence SRSSFSQHAR. The LTD domain maps to 428 to 545; sequence SSFSQHARTS…EEVAMRKLVR (118 aa). A Glycyl lysine isopeptide (Lys-Gly) (interchain with G-Cter in SUMO2); alternate cross-link involves residue K450. Residues K450 and K457 each carry the N6-acetyllysine modification. 2 positions are modified to phosphoserine: S458 and S463. Residues K470 and K486 each participate in a glycyl lysine isopeptide (Lys-Gly) (interchain with G-Cter in SUMO2) cross-link. K486 carries the post-translational modification N6-acetyllysine. 3 positions are modified to phosphothreonine: T496, T505, and T510. Phosphoserine is present on residues S533 and S546. T548 carries the phosphothreonine modification. Residues 552–576 form a disordered region; sequence DDEDEDGDDLLHHHHGSHCSSSGDP. S568 and S571 each carry phosphoserine. Residue K597 forms a Glycyl lysine isopeptide (Lys-Gly) (interchain with G-Cter in SUMO2); alternate linkage. Residue K597 forms a Glycyl lysine isopeptide (Lys-Gly) (interchain with G-Cter in SUMO1); alternate linkage. Residues 598 to 619 form a disordered region; sequence ASASGSGAQVGGPISSGSSASS. Phosphoserine is present on residues S612, S613, S616, and S619. Residues S625 and S628 are each glycosylated (O-linked (GlcNAc) serine). S628, S632, S636, and S652 each carry phosphoserine. Positions 647 to 661 are cleaved as a propeptide — removed in Lamin-A/C form; that stretch reads LLGNSSPRTQSPQNC. Cysteine methyl ester is present on C661. C661 carries S-farnesyl cysteine lipidation. Residues 662-664 constitute a propeptide, removed in Prelamin-A/C form and in Lamin-A/C form; the sequence is SIM.

This sequence belongs to the intermediate filament family. As to quaternary structure, homodimer of lamin A and lamin C. Lamin dimers then assemble into dimeric head-to-tail polymers. Ultimately, two head-to-tail polymers assemble laterally into a protofilament with a uniformly shaped rod of 3.5 nm in diameter. Interacts with lamin-associated polypeptides IA, IB and TMPO-alpha, RB1 and with emerin. Interacts with SREBF1, SREBF2, SUN2 and TMEM43. Interacts with TMEM201. Proteolytically processed isoform A interacts with NARF. Interacts with SUN1. Interacts with MLIP. Interacts with DMPK; may regulate nuclear envelope stability. Interacts with SUV39H1; the interaction increases stability of SUV39H1. Interacts with SYNE2. Interacts with ITSN1 isoform 2. Interacts with IFFO1; enables the formation of an interior nucleoskeleton that is recruited to DNA double-strand breaks. In terms of assembly, interacts with EMD. Interacts (via C-terminus) with LEMD2 (via N-terminus) (in vitro). Proteolytic cleavage of the C-terminal of 18 residues of prelamin-A/C results in the production of lamin-A/C. The prelamin-A/C maturation pathway includes farnesylation of CAAX motif by protein farnesyltransferase (FNTA and FNTB), removal of the last three amino acids (-AAX) by RCE1/FACE2 and/or ZMPSTE24, methylation of the C-terminal cysteine by ICMT and endoproteolytic removal of the last 15 C-terminal amino acids by ZMPSTE24. Proteolytic cleavage requires prior farnesylation and methylation, and absence of these blocks cleavage. Post-translationally, farnesylation of prelamin-A/C facilitates nuclear envelope targeting. In terms of processing, phosphorylation plays a key role in lamin organization, subcellular localization and nuclear envelope disintegration. Phosphorylation by CDK1 at Ser-22 and Ser-392 at the onset of mitosis drives lamin disassembly and nuclear envelope breakdown. Phosphorylation at Ser-22 and Ser-392 during interphase promotes localization to the nucleoplasm and regulates lamina assembly. Phosphorylation at Ser-22, Ser-392 and Ser-628 during interphase causes redistribution between the nucleus and the cytoplasm. Phosphorylation at Ser-22 by CDK1 regulates matrix stiffness. Phosphorylation status of Ser-22 determines its localization between double-strand break (DSB) sites and the nuclear matrix. Phosphorylated by ATR at Ser-282 in response to DNA damage, leading to lamin disassembly and nuclear envelope rupture. Phosphorylation also regulates stability in micronuclei arising from genome instability: phosphorylation at Ser-395 by ATR in response to genome instability and double-stranded DNA breaks primes LMNA for subsequent phosphorylation at Ser-392 by CDK1 and micronuclei envelope rupture. The rupture of micronuclear envelope triggers the cGAS-STING pathway thereby activating the type I interferon response and innate immunity. Acetylation by KAT8 is required for nuclear architecture. Post-translationally, sumoylation is necessary for the localization to the nuclear envelope. As to expression, in the arteries, prelamin-A/C accumulation is not observed in young healthy vessels but is prevalent in medial vascular smooth muscle cells (VSMCs) from aged individuals and in atherosclerotic lesions, where it often colocalizes with senescent and degenerate VSMCs. Prelamin-A/C expression increases with age and disease. In normal aging, the accumulation of prelamin-A/C is caused in part by the down-regulation of ZMPSTE24/FACE1 in response to oxidative stress.

It is found in the nucleus lamina. It localises to the nucleus envelope. Its subcellular location is the nucleus. The protein localises to the nucleoplasm. The protein resides in the nucleus matrix. It is found in the nucleus speckle. In terms of biological role, lamins are intermediate filament proteins that assemble into a filamentous meshwork, and which constitute the major components of the nuclear lamina, a fibrous layer on the nucleoplasmic side of the inner nuclear membrane. Lamins provide a framework for the nuclear envelope, bridging the nuclear envelope and chromatin, thereby playing an important role in nuclear assembly, chromatin organization, nuclear membrane and telomere dynamics. Lamin A and C also regulate matrix stiffness by conferring nuclear mechanical properties. The structural integrity of the lamina is strictly controlled by the cell cycle, as seen by the disintegration and formation of the nuclear envelope in prophase and telophase, respectively. Lamin A and C are present in equal amounts in the lamina of mammals. Also invoved in DNA repair: recruited by DNA repair proteins XRCC4 and IFFO1 to the DNA double-strand breaks (DSBs) to prevent chromosome translocation by immobilizing broken DNA ends. Required for normal development of peripheral nervous system and skeletal muscle and for muscle satellite cell proliferation. Required for osteoblastogenesis and bone formation. Also prevents fat infiltration of muscle and bone marrow, helping to maintain the volume and strength of skeletal muscle and bone. Required for cardiac homeostasis. Its function is as follows. Prelamin-A/C can accelerate smooth muscle cell senescence. It acts to disrupt mitosis and induce DNA damage in vascular smooth muscle cells (VSMCs), leading to mitotic failure, genomic instability, and premature senescence. The chain is Prelamin-A/C (LMNA) from Homo sapiens (Human).